Reading from the N-terminus, the 298-residue chain is Acetate permease A (298 aa).

Residues 1 to 43 (MSAEQNHGLEKDVGGPAAPAAAAPNAPAAAPGAPPAGMSAEEH) are disordered. Residues 14–37 (GGPAAPAAAAPNAPAAAPGAPPAG) are compositionally biased toward low complexity. 6 consecutive transmembrane segments (helical) span residues 86-106 (APLG…INMG), 115-135 (IVIA…GMWE), 146-166 (ALSS…PGGF), 185-205 (SFGL…FCTL), 210-230 (AFFL…VGYI), and 245-265 (AGGF…LAGI).

The protein belongs to the acetate uptake transporter (AceTr) (TC 2.A.96) family.

It localises to the cell membrane. The protein localises to the vacuole membrane. In terms of biological role, high affinity monocarboxylate transporter (MCT) involved in acetate uptake. Unlike other activities involved in acetate utilization, acpA is dispensable for growth on the acetate precursor ethanol. In Emericella nidulans (strain FGSC A4 / ATCC 38163 / CBS 112.46 / NRRL 194 / M139) (Aspergillus nidulans), this protein is Acetate permease A.